Consider the following 273-residue polypeptide: Putative pyruvate, phosphate dikinase regulatory protein (273 aa).

153 to 160 serves as a coordination point for ADP; it reads GISRTSKT.

Belongs to the pyruvate, phosphate/water dikinase regulatory protein family. PDRP subfamily.

It catalyses the reaction N(tele)-phospho-L-histidyl/L-threonyl-[pyruvate, phosphate dikinase] + ADP = N(tele)-phospho-L-histidyl/O-phospho-L-threonyl-[pyruvate, phosphate dikinase] + AMP + H(+). The catalysed reaction is N(tele)-phospho-L-histidyl/O-phospho-L-threonyl-[pyruvate, phosphate dikinase] + phosphate + H(+) = N(tele)-phospho-L-histidyl/L-threonyl-[pyruvate, phosphate dikinase] + diphosphate. Functionally, bifunctional serine/threonine kinase and phosphorylase involved in the regulation of the pyruvate, phosphate dikinase (PPDK) by catalyzing its phosphorylation/dephosphorylation. The sequence is that of Putative pyruvate, phosphate dikinase regulatory protein from Rhizobium etli (strain ATCC 51251 / DSM 11541 / JCM 21823 / NBRC 15573 / CFN 42).